Reading from the N-terminus, the 397-residue chain is Succinyl-diaminopimelate desuccinylase (397 aa).

H73 is a Zn(2+) binding site. D75 is a catalytic residue. D106 provides a ligand contact to Zn(2+). E140 serves as the catalytic Proton acceptor. Zn(2+) is bound by residues E141, E169, and H366.

Belongs to the peptidase M20A family. DapE subfamily. As to quaternary structure, homodimer. Zn(2+) serves as cofactor. Co(2+) is required as a cofactor.

The catalysed reaction is N-succinyl-(2S,6S)-2,6-diaminopimelate + H2O = (2S,6S)-2,6-diaminopimelate + succinate. Its pathway is amino-acid biosynthesis; L-lysine biosynthesis via DAP pathway; LL-2,6-diaminopimelate from (S)-tetrahydrodipicolinate (succinylase route): step 3/3. Its function is as follows. Catalyzes the hydrolysis of N-succinyl-L,L-diaminopimelic acid (SDAP), forming succinate and LL-2,6-diaminopimelate (DAP), an intermediate involved in the bacterial biosynthesis of lysine and meso-diaminopimelic acid, an essential component of bacterial cell walls. The polypeptide is Succinyl-diaminopimelate desuccinylase (Rhizobium johnstonii (strain DSM 114642 / LMG 32736 / 3841) (Rhizobium leguminosarum bv. viciae)).